Consider the following 469-residue polypeptide: 3-isopropylmalate dehydratase large subunit (469 aa).

Residues C346, C406, and C409 each coordinate [4Fe-4S] cluster.

This sequence belongs to the aconitase/IPM isomerase family. LeuC type 1 subfamily. In terms of assembly, heterodimer of LeuC and LeuD. [4Fe-4S] cluster serves as cofactor.

It catalyses the reaction (2R,3S)-3-isopropylmalate = (2S)-2-isopropylmalate. Its pathway is amino-acid biosynthesis; L-leucine biosynthesis; L-leucine from 3-methyl-2-oxobutanoate: step 2/4. Its function is as follows. Catalyzes the isomerization between 2-isopropylmalate and 3-isopropylmalate, via the formation of 2-isopropylmaleate. In Lysinibacillus sphaericus (strain C3-41), this protein is 3-isopropylmalate dehydratase large subunit.